Here is a 333-residue protein sequence, read N- to C-terminus: Tryptophan--tRNA ligase (333 aa).

Residues Q11–S13 and G19–N20 contribute to the ATP site. The 'HIGH' region motif lies at P12 to N20. D135 is a binding site for L-tryptophan. ATP contacts are provided by residues G147–D149, V186, and K195–S199. A 'KMSKS' region motif is present at residues K195–S199.

This sequence belongs to the class-I aminoacyl-tRNA synthetase family. Homodimer.

Its subcellular location is the cytoplasm. The enzyme catalyses tRNA(Trp) + L-tryptophan + ATP = L-tryptophyl-tRNA(Trp) + AMP + diphosphate + H(+). Functionally, catalyzes the attachment of tryptophan to tRNA(Trp). In Pasteurella multocida (strain Pm70), this protein is Tryptophan--tRNA ligase.